Consider the following 319-residue polypeptide: Aspartate carbamoyltransferase catalytic subunit (319 aa).

Residues R59 and T60 each contribute to the carbamoyl phosphate site. K87 is a binding site for L-aspartate. Residues R109, H137, and Q140 each coordinate carbamoyl phosphate. Positions 170 and 224 each coordinate L-aspartate. The carbamoyl phosphate site is built by G265 and P266.

It belongs to the aspartate/ornithine carbamoyltransferase superfamily. ATCase family. In terms of assembly, heterododecamer (2C3:3R2) of six catalytic PyrB chains organized as two trimers (C3), and six regulatory PyrI chains organized as three dimers (R2).

It catalyses the reaction carbamoyl phosphate + L-aspartate = N-carbamoyl-L-aspartate + phosphate + H(+). Its pathway is pyrimidine metabolism; UMP biosynthesis via de novo pathway; (S)-dihydroorotate from bicarbonate: step 2/3. Its function is as follows. Catalyzes the condensation of carbamoyl phosphate and aspartate to form carbamoyl aspartate and inorganic phosphate, the committed step in the de novo pyrimidine nucleotide biosynthesis pathway. The protein is Aspartate carbamoyltransferase catalytic subunit of Gemmatimonas aurantiaca (strain DSM 14586 / JCM 11422 / NBRC 100505 / T-27).